A 203-amino-acid chain; its full sequence is Probable GTP-binding protein EngB (203 aa).

Residues 22–195 form the EngB-type G domain; it reads GIPEIALAGR…WEEIVNQYNQ (174 aa). GTP contacts are provided by residues 30-37, 57-61, 75-78, 142-145, and 174-176; these read GRSNVGKS, GKTRT, DLPG, TKAD, and VSS. The Mg(2+) site is built by Ser-37 and Thr-59.

Belongs to the TRAFAC class TrmE-Era-EngA-EngB-Septin-like GTPase superfamily. EngB GTPase family. Requires Mg(2+) as cofactor.

Necessary for normal cell division and for the maintenance of normal septation. The chain is Probable GTP-binding protein EngB from Clostridioides difficile (strain 630) (Peptoclostridium difficile).